The sequence spans 545 residues: Toxin BC_0920 (545 aa).

The LXG domain maps to 1–217 (MSLNMYLGEV…ARQAANSIEE (217 aa)).

It in the N-terminal section; belongs to the LXG family. The protein in the C-terminal section; belongs to the bacterial EndoU family. Probably interacts with cognate immunity protein BC_0921. The interaction inhibits the toxic activity of BC_0921.

It is found in the secreted. In terms of biological role, toxic component of an LXG toxin-immunity module. The C-terminus (residues 322-545) has RNase activity in E.coli which is neutralized by cognate immunity protein BC_0921, but not by immunity proteins specific to other toxins with the LXG domain. Degrades 5S rRNA and several tRNAs in vitro; cleavage is endonucleolytic within the anticodon loop for tRNA(GAU-Ile) and tRNA(UUC-Glu) but total for 5S rRNA and at least one other tRNA. RNase activity is suppressed by cognate immunity protein BC_0921. In Bacillus cereus (strain ATCC 14579 / DSM 31 / CCUG 7414 / JCM 2152 / NBRC 15305 / NCIMB 9373 / NCTC 2599 / NRRL B-3711), this protein is Toxin BC_0920.